The following is a 512-amino-acid chain: Bestrophin-2 (512 aa).

Residues 1–31 are Cytoplasmic-facing; sequence MTVTYTARVAKARFGGFSKLLLLWRGSIYKL. Position 10 (Ala-10) interacts with Ca(2+). The chain crosses the membrane as a helical span at residues 32 to 51; sequence LWRELLCFLGLFMALSAAYR. Over 52–60 the chain is Extracellular; it reads FVLTEEQKR. The helical transmembrane segment at 61–82 threads the bilayer; that stretch reads YFEKLVLYCDRYASLIPVSFVL. Over 83-238 the chain is Cytoplasmic; the sequence is GFYVTLVVHR…WISVPLVYTQ (156 aa). The chain crosses the membrane as a helical span at residues 239–255; sequence VVTIAVYSYFLACLIGR. At 256–274 the chain is on the extracellular side; that stretch reads QFLDPAQGYKDHDLDLCVP. The chain crosses the membrane as a helical span at residues 275-288; the sequence is IFTLLQFFFYAGWL. At 289 to 512 the chain is on the cytoplasmic side; sequence KVAEQLINPF…PIGEEEESLA (224 aa). 4 residues coordinate Ca(2+): Gln-293, Asn-296, Asp-301, and Asp-304. Residues 453–512 are disordered; the sequence is VDLGQPEPESEPITGPESPALVPAPRAPSEPLTVVPLSGTRGPAPPWLPSPIGEEEESLA.

Belongs to the anion channel-forming bestrophin (TC 1.A.46) family. Calcium-sensitive chloride channel subfamily. As to quaternary structure, pentamer. Interacts with GLUL; this interaction tethers a fraction of GLUL to the membrane, causing a decrease of cytosolic glutamine synthase (GS) activity and inhibits the chloride channel activity of BEST2 by affecting the gating at the aperture in the absence of intracellular glutamate.

The protein localises to the cell membrane. It is found in the basolateral cell membrane. The catalysed reaction is chloride(in) = chloride(out). The enzyme catalyses iodide(out) = iodide(in). It catalyses the reaction hydrogencarbonate(in) = hydrogencarbonate(out). It carries out the reaction L-glutamate(out) = L-glutamate(in). The catalysed reaction is L-glutamine(out) = L-glutamine(in). With respect to regulation, chloride channel activity is allosterically inhibited by GLUL/glutamine synthase (GS) which affects the gating at the aperture in the absence of intracellular glutamate. Inhibitory effect of GLUL is relieved upon increasing of intracellular level of L-glutamate. Ligand-gated anion channel that allows the movement of anions across cell membranes when activated by calcium (Ca2+). Transports a large specter of anions, namely mediates the movement of chloride, L-glutamate and iodide. Calcium-binding triggers the dilation of the aperture, but calcium-dependent gating is only effective when the size of the passing anion is bigger than the closed aperture. Mediates the calcium-activated hydrogencarbonate movement and participates in colonic hydrogencarbonate secretion concomitant with mucin secretion. In non-pigmented epithelium (NPE), mediates the efflux of intracellular L-glutamate; binding of intracellular L-glutamate activates and open both the neck and the aperture of the channel, leading to L-glutamate exit promoting chloride influx movement from the extracellular side in trans. Also exhibits a directional permeability for intracellular glutamine, in a similar manner as for L-glutamate. In Bos taurus (Bovine), this protein is Bestrophin-2.